The following is a 498-amino-acid chain: 3-octaprenyl-4-hydroxybenzoate carboxy-lyase (498 aa).

N175 is a binding site for Mn(2+). Residues 178-180 (IYR), 192-194 (RWL), and 197-198 (RG) each bind prenylated FMN. E241 lines the Mn(2+) pocket. The Proton donor role is filled by D290.

Belongs to the UbiD family. Homohexamer. It depends on prenylated FMN as a cofactor. Mn(2+) is required as a cofactor.

It is found in the cell membrane. It carries out the reaction a 4-hydroxy-3-(all-trans-polyprenyl)benzoate + H(+) = a 2-(all-trans-polyprenyl)phenol + CO2. It participates in cofactor biosynthesis; ubiquinone biosynthesis. In terms of biological role, catalyzes the decarboxylation of 3-octaprenyl-4-hydroxy benzoate to 2-octaprenylphenol, an intermediate step in ubiquinone biosynthesis. This chain is 3-octaprenyl-4-hydroxybenzoate carboxy-lyase, found in Yersinia pestis bv. Antiqua (strain Antiqua).